Reading from the N-terminus, the 129-residue chain is MAKEATRVRRRERKNIVSGVAHVNSTFNNTMITITDAQGNTISWSSAGMMGFKGSRKSTPYAAQMAAEDCARKAVEHGMRTLEVEVSGPGSGRESALRALQAAGFTVTSIRDVTPIPHNGCRPRKRRRV.

The protein belongs to the universal ribosomal protein uS11 family. As to quaternary structure, part of the 30S ribosomal subunit. Interacts with proteins S7 and S18. Binds to IF-3.

Its function is as follows. Located on the platform of the 30S subunit, it bridges several disparate RNA helices of the 16S rRNA. Forms part of the Shine-Dalgarno cleft in the 70S ribosome. This Beijerinckia indica subsp. indica (strain ATCC 9039 / DSM 1715 / NCIMB 8712) protein is Small ribosomal subunit protein uS11.